A 510-amino-acid chain; its full sequence is AAA-ATPase At3g28540 (510 aa).

Residues L7 to Y25 form a helical membrane-spanning segment. ATP is bound at residue G246–S253. The tract at residues K460–I510 is disordered.

Belongs to the AAA ATPase family. BCS1 subfamily. Mg(2+) serves as cofactor.

The protein localises to the membrane. It carries out the reaction ATP + H2O = ADP + phosphate + H(+). The protein is AAA-ATPase At3g28540 of Arabidopsis thaliana (Mouse-ear cress).